Consider the following 29-residue polypeptide: KSAAEVQNTQQAIIPAQEKANLGNQNIMA.

Homodimer.

The protein localises to the cytoplasm. The polypeptide is NADP phosphatase 1 (Arthrobacter sp. (strain KM)).